A 496-amino-acid chain; its full sequence is Cyclin-dependent kinase 16 (496 aa).

The interval 1–97 (MDRMKKIKRQ…TSSDEVQSPV (97 aa)) is disordered. Ser12 carries the post-translational modification Phosphoserine; by BRSK2. Phosphoserine is present on residues Ser36, Ser42, Ser64, Ser65, Ser78, Ser82, and Ser89. Residues 69 to 78 (IVHEDLKMGS) show a composition bias toward basic and acidic residues. Over residues 83 to 93 (DQASATSSDEV) the composition is skewed to polar residues. At Ser95 the chain carries Phosphoserine; by CDK5. 6 positions are modified to phosphoserine: Ser110, Ser119, Ser138, Ser146, Ser153, and Ser155. The Protein kinase domain maps to 165-446 (YIKLDKLGEG…AEDAMKHPFF (282 aa)). ATP contacts are provided by residues 171–179 (LGEGTYATV) and Lys194. Thr175 carries the phosphothreonine modification. Asp286 functions as the Proton acceptor in the catalytic mechanism. Position 380 is a phosphothreonine (Thr380). Phosphoserine occurs at positions 391, 478, and 480.

The protein belongs to the protein kinase superfamily. CMGC Ser/Thr protein kinase family. CDC2/CDKX subfamily. Found in a complex containing CABLES1, CDK17 and TDRD7. Interacts with BRSK2. Identified in a complex with NSF, syntaxin-1, synaptotagmin, SYN1, SYP and CDK5R1. Interacts with YWHAH, YWHAQ and YWHAZ. Interacts with CCNY; this interaction increases the CDK16 kinase activity. Interacts with CCNYL1; this interaction mutually increases the stability of CDK16 and CCNYL1 and increases the kinase activity of CDK16. Interacts with NSF. Post-translationally, phosphorylation of CDK16 is essential for the binding of CCNY, but also essential for the regulation of CDK16 kinase activity. Phosphorylation of CDK16 is essential for the binding of CCNYl1, but also essential for the regulation of CDK16 kinase activity. Ser-146 and Ser-153 are the most critical sites for the binding of CCNYL1 and for modulating CDK16 kinase activity. Phosphorylation at Ser-153 inhibits kinase activity. Detected in pancreas islets (at protein level). Detected in brain and pancreas.

It localises to the cytoplasm. Its subcellular location is the cytoplasmic vesicle. It is found in the secretory vesicle. The protein localises to the cell membrane. The protein resides in the synapse. It localises to the synaptosome. The enzyme catalyses L-seryl-[protein] + ATP = O-phospho-L-seryl-[protein] + ADP + H(+). It carries out the reaction L-threonyl-[protein] + ATP = O-phospho-L-threonyl-[protein] + ADP + H(+). Protein kinase that plays a role in vesicle-mediated transport processes and exocytosis. Regulates GH1 release by brain neurons. Phosphorylates NSF, and thereby regulates NSF oligomerization. Required for normal spermatogenesis. Regulates neuron differentiation and dendrite development. Plays a role in the regulation of insulin secretion in response to changes in blood glucose levels. Can phosphorylate CCNY at 'Ser-336' (in vitro). In Homo sapiens (Human), this protein is Cyclin-dependent kinase 16 (CDK16).